Reading from the N-terminus, the 588-residue chain is Interferon-activable protein 208 (588 aa).

The 88-residue stretch at 5–92 folds into the Pyrin domain; sequence MVNYYKQIVL…VDILRKEMEK (88 aa). Disordered stretches follow at residues 157 to 183 and 469 to 526; these read ATSTSQAEGEPLTPQRFPTTASSSLQT and EMQN…RRVN. 2 stretches are compositionally biased toward polar residues: residues 172–183 and 470–487; these read RFPTTASSSLQT and MQNPQSGLGTGLSDQPRL.

This sequence belongs to the HIN-200 family.

The polypeptide is Interferon-activable protein 208 (Mus musculus (Mouse)).